The following is an 82-amino-acid chain: Conotoxin Tx6.6 (82 aa).

The N-terminal stretch at 1–19 (MKLTCVMIVAVLFLTAWTL) is a signal peptide. Positions 20 to 51 (VMADDSNNGLANLFSKLRDEMEDPEGSKLEKK) are excised as a propeptide. 3 cysteine pairs are disulfide-bonded: cysteine 53–cysteine 71, cysteine 60–cysteine 76, and cysteine 70–cysteine 81. Alanine 82 is subject to Alanine amide; partial.

This sequence belongs to the O1 superfamily. Expressed by the venom duct.

It localises to the secreted. Functionally, omega-conotoxins act at presynaptic membranes, they bind and block voltage-gated calcium channels (Cav). The protein is Conotoxin Tx6.6 of Conus textile (Cloth-of-gold cone).